The sequence spans 104 residues: Co-chaperonin GroES 2 (104 aa).

Belongs to the GroES chaperonin family. As to quaternary structure, heptamer of 7 subunits arranged in a ring. Interacts with the chaperonin GroEL.

The protein resides in the cytoplasm. Functionally, together with the chaperonin GroEL, plays an essential role in assisting protein folding. The GroEL-GroES system forms a nano-cage that allows encapsulation of the non-native substrate proteins and provides a physical environment optimized to promote and accelerate protein folding. GroES binds to the apical surface of the GroEL ring, thereby capping the opening of the GroEL channel. The protein is Co-chaperonin GroES 2 of Rhodopseudomonas palustris (strain ATCC BAA-98 / CGA009).